The primary structure comprises 225 residues: Small ribosomal subunit protein uS2 (225 aa).

The span at 1 to 13 (MAEAKPALEKEAA) shows a compositional bias: basic and acidic residues. The segment at 1-33 (MAEAKPALEKEAAVKTGSIPSESEDETASHKEG) is disordered.

It belongs to the universal ribosomal protein uS2 family.

This Methanosarcina acetivorans (strain ATCC 35395 / DSM 2834 / JCM 12185 / C2A) protein is Small ribosomal subunit protein uS2.